We begin with the raw amino-acid sequence, 146 residues long: Hemoglobin subunit beta (146 aa).

Ala-1 carries the post-translational modification N-acetylalanine. Residues 2-146 (SFDPHEKQLI…VAAALAAEYH (145 aa)) enclose the Globin domain. Heme b-binding residues include His-63 and His-92.

Belongs to the globin family. In terms of assembly, heterotetramer of two alpha chains and two beta chains. Red blood cells.

Functionally, involved in oxygen transport from the lung to the various peripheral tissues. This chain is Hemoglobin subunit beta (HBB), found in Crocodylus niloticus (Nile crocodile).